The following is a 312-amino-acid chain: Glycine--tRNA ligase alpha subunit (312 aa).

This sequence belongs to the class-II aminoacyl-tRNA synthetase family. As to quaternary structure, tetramer of two alpha and two beta subunits.

It is found in the cytoplasm. It carries out the reaction tRNA(Gly) + glycine + ATP = glycyl-tRNA(Gly) + AMP + diphosphate. The polypeptide is Glycine--tRNA ligase alpha subunit (glyQ) (Buchnera aphidicola subsp. Acyrthosiphon pisum (strain APS) (Acyrthosiphon pisum symbiotic bacterium)).